Consider the following 255-residue polypeptide: Sulfate transporter CysZ (255 aa).

The next 4 membrane-spanning stretches (helical) occupy residues 26-46, 71-91, 150-170, and 211-231; these read LFVL…IYFA, LLWP…FTML, LFIL…WLLF, and IVYL…AAVA.

The protein belongs to the CysZ family.

It is found in the cell inner membrane. High affinity, high specificity proton-dependent sulfate transporter, which mediates sulfate uptake. Provides the sulfur source for the cysteine synthesis pathway. This chain is Sulfate transporter CysZ, found in Pseudomonas fluorescens (strain SBW25).